Consider the following 199-residue polypeptide: MFAYIKGTVEEKNNDSIIVEAGGIGYRIFTALSTINNMGQNGTTVKIYTHYYVREDIAVLYGFGTVEELTMFEMLLTVSGVGPKAAISMISTLSPSRFYLAVVSQDTKSLTKAPGIGMKMAQRIILDLKDKISKEQLTSSIPMTSPENNEVTGDSVLSEAVSALMVLGYGSAEASSTISGIYEKGISVEELVKKALKSL.

The segment at 1–64 is domain I; it reads MFAYIKGTVE…EDIAVLYGFG (64 aa). Residues 65–143 form a domain II region; it reads TVEELTMFEM…KEQLTSSIPM (79 aa). Residues 144–151 form a flexible linker region; that stretch reads TSPENNEV. Residues 152–199 form a domain III region; sequence TGDSVLSEAVSALMVLGYGSAEASSTISGIYEKGISVEELVKKALKSL.

Belongs to the RuvA family. In terms of assembly, homotetramer. Forms an RuvA(8)-RuvB(12)-Holliday junction (HJ) complex. HJ DNA is sandwiched between 2 RuvA tetramers; dsDNA enters through RuvA and exits via RuvB. An RuvB hexamer assembles on each DNA strand where it exits the tetramer. Each RuvB hexamer is contacted by two RuvA subunits (via domain III) on 2 adjacent RuvB subunits; this complex drives branch migration. In the full resolvosome a probable DNA-RuvA(4)-RuvB(12)-RuvC(2) complex forms which resolves the HJ.

The protein resides in the cytoplasm. In terms of biological role, the RuvA-RuvB-RuvC complex processes Holliday junction (HJ) DNA during genetic recombination and DNA repair, while the RuvA-RuvB complex plays an important role in the rescue of blocked DNA replication forks via replication fork reversal (RFR). RuvA specifically binds to HJ cruciform DNA, conferring on it an open structure. The RuvB hexamer acts as an ATP-dependent pump, pulling dsDNA into and through the RuvAB complex. HJ branch migration allows RuvC to scan DNA until it finds its consensus sequence, where it cleaves and resolves the cruciform DNA. This Ruminiclostridium cellulolyticum (strain ATCC 35319 / DSM 5812 / JCM 6584 / H10) (Clostridium cellulolyticum) protein is Holliday junction branch migration complex subunit RuvA.